A 430-amino-acid chain; its full sequence is Small ribosomal subunit protein uS5m (430 aa).

Positions 218-282 (FDTRILEVRN…NRAVHHLHYI (65 aa)) constitute an S5 DRBM domain.

The protein belongs to the universal ribosomal protein uS5 family. In terms of assembly, component of the mitochondrial small ribosomal subunit (mt-SSU). Mature mammalian 55S mitochondrial ribosomes consist of a small (28S) and a large (39S) subunit. The 28S small subunit contains a 12S ribosomal RNA (12S mt-rRNA) and 30 different proteins. The 39S large subunit contains a 16S rRNA (16S mt-rRNA), a copy of mitochondrial valine transfer RNA (mt-tRNA(Val)), which plays an integral structural role, and 52 different proteins.

It is found in the mitochondrion. This is Small ribosomal subunit protein uS5m (MRPS5) from Homo sapiens (Human).